A 119-amino-acid chain; its full sequence is Large ribosomal subunit protein uL18 (119 aa).

It belongs to the universal ribosomal protein uL18 family. Part of the 50S ribosomal subunit; part of the 5S rRNA/L5/L18/L25 subcomplex. Contacts the 5S and 23S rRNAs.

In terms of biological role, this is one of the proteins that bind and probably mediate the attachment of the 5S RNA into the large ribosomal subunit, where it forms part of the central protuberance. The polypeptide is Large ribosomal subunit protein uL18 (Desulfovibrio desulfuricans (strain ATCC 27774 / DSM 6949 / MB)).